We begin with the raw amino-acid sequence, 810 residues long: DNA gyrase subunit A (810 aa).

The 467-residue stretch at 36-502 (LPDVRDGLKP…EVLKTSMSDL (467 aa)) folds into the Topo IIA-type catalytic domain. The active-site O-(5'-phospho-DNA)-tyrosine intermediate is Y124. A C-terminal domain region spans residues 499 to 810 (MSDLMQKENI…SLVSVSKFIK (312 aa)). The short motif at 529 to 535 (QGTGGKG) is the GyrA-box element.

It belongs to the type II topoisomerase GyrA/ParC subunit family. As to quaternary structure, heterotetramer, composed of two GyrA and two GyrB chains. In the heterotetramer, GyrA contains the active site tyrosine that forms a transient covalent intermediate with DNA, while GyrB binds cofactors and catalyzes ATP hydrolysis.

The protein resides in the cytoplasm. It carries out the reaction ATP-dependent breakage, passage and rejoining of double-stranded DNA.. A type II topoisomerase that negatively supercoils closed circular double-stranded (ds) DNA in an ATP-dependent manner to modulate DNA topology and maintain chromosomes in an underwound state. Negative supercoiling favors strand separation, and DNA replication, transcription, recombination and repair, all of which involve strand separation. Also able to catalyze the interconversion of other topological isomers of dsDNA rings, including catenanes and knotted rings. Type II topoisomerases break and join 2 DNA strands simultaneously in an ATP-dependent manner. The polypeptide is DNA gyrase subunit A (Borreliella burgdorferi (strain ATCC 35210 / DSM 4680 / CIP 102532 / B31) (Borrelia burgdorferi)).